We begin with the raw amino-acid sequence, 298 residues long: Glutamyl-Q tRNA(Asp) synthetase (298 aa).

L-glutamate is bound by residues 8–12 (RFAPS) and Glu-44. The 'HIGH' region motif lies at 11 to 21 (PSPTGPLHFGS). Cys-100, Cys-102, Tyr-123, and Cys-127 together coordinate Zn(2+). The L-glutamate site is built by Tyr-183 and Arg-201. Residues 239-243 (KLSKQ) carry the 'KMSKS' region motif. Lys-242 provides a ligand contact to ATP.

The protein belongs to the class-I aminoacyl-tRNA synthetase family. GluQ subfamily. It depends on Zn(2+) as a cofactor.

Catalyzes the tRNA-independent activation of glutamate in presence of ATP and the subsequent transfer of glutamate onto a tRNA(Asp). Glutamate is transferred on the 2-amino-5-(4,5-dihydroxy-2-cyclopenten-1-yl) moiety of the queuosine in the wobble position of the QUC anticodon. The chain is Glutamyl-Q tRNA(Asp) synthetase from Burkholderia cenocepacia (strain ATCC BAA-245 / DSM 16553 / LMG 16656 / NCTC 13227 / J2315 / CF5610) (Burkholderia cepacia (strain J2315)).